We begin with the raw amino-acid sequence, 387 residues long: Protein kinase gsk3 (387 aa).

A Protein kinase domain is found at Y32–F316. Residues V38–V46 and K61 each bind ATP. D157 serves as the catalytic Proton acceptor. S191 carries the phosphoserine modification. Y192 is subject to Phosphotyrosine; by autocatalysis. A Phosphoserine modification is found at S335.

It belongs to the protein kinase superfamily. CMGC Ser/Thr protein kinase family. GSK-3 subfamily. In terms of processing, autophosphorylated on tyrosine residues.

It is found in the cytoplasm. It localises to the nucleus. The catalysed reaction is L-seryl-[protein] + ATP = O-phospho-L-seryl-[protein] + ADP + H(+). The enzyme catalyses L-threonyl-[protein] + ATP = O-phospho-L-threonyl-[protein] + ADP + H(+). Functionally, interacts with cdc14 which is thought to play a role in the initiation and completion of mitosis. Involved in the positive regulation of mis12. This is Protein kinase gsk3 (gsk3) from Schizosaccharomyces pombe (strain 972 / ATCC 24843) (Fission yeast).